The sequence spans 82 residues: MQTAYWVVVMMMMVWVTAPVSEGGKLSDVIWGLVPDDLTPQIILQILNASRHAYRRVRPRGQICIWKVCPPLPQWIHPLVKR.

Residues 1–22 (MQTAYWVVVMMMMVWVTAPVSE) form the signal peptide. Positions 23–60 (GGKLSDVIWGLVPDDLTPQIILQILNASRHAYRRVRPR) are excised as a propeptide. A disulfide bridge links cysteine 64 with cysteine 69. D-tryptophan is present on tryptophan 66. 4-hydroxyproline occurs at positions 70, 71, and 73. The propeptide occupies 74–82 (QWIHPLVKR).

Belongs to the conotoxin C superfamily. Consomatin family. Expressed by the venom duct.

The protein resides in the secreted. In terms of biological role, moderately activates human somatostatin receptors (SSTR) with a preferential activation of SSTR1 and SSTR4. In vivo, does not cause behavioral changes in mice within a few minutes of intracranial injection, but causes a progressive loss of movement thereafter. Four to five hours after injection, mice recover, even with the highest dose tested. Shows antinociception and antihyperalgesia activities in two mouse models of acute pain, most probably by acting outside the central nervous system. The protein is Consomatin Ar1 of Conus arenatus (Sand-dusted cone).